Here is a 263-residue protein sequence, read N- to C-terminus: Bidirectional sugar transporter SWEET3 (263 aa).

At 1–7 (MGDKLRL) the chain is on the extracellular side. Residues 8–28 (SIGILGNGASLLLYTAPIVTF) traverse the membrane as a helical segment. The region spanning 9 to 97 (IGILGNGASL…FIYFYYASPK (89 aa)) is the MtN3/slv 1 domain. Topologically, residues 29–42 (SRVFKKKSTEEFSC) are cytoplasmic. A helical membrane pass occupies residues 43–63 (FPYVMTLFNCLIYTWYGLPIV). The Extracellular portion of the chain corresponds to 64–71 (SHLWENLP). The chain crosses the membrane as a helical span at residues 72-92 (LVTINGVGILLESIFIFIYFY). Over 93-103 (YASPKEKIKVG) the chain is Cytoplasmic. Residues 104-124 (VTFVPVIVGFGLTTAISALVF) traverse the membrane as a helical segment. The Extracellular portion of the chain corresponds to 125–132 (DDHRHRKS). The helical transmembrane segment at 133-153 (FVGSVGLVASISMYGSPLVVM) threads the bilayer. One can recognise a MtN3/slv 2 domain in the interval 133 to 217 (FVGSVGLVAS…ILYFKYKNKK (85 aa)). At 154-165 (KKVIETRSVEYM) the chain is on the cytoplasmic side. Residues 166 to 186 (PFYLSFFSFLASSLWLAYGLL) form a helical membrane-spanning segment. Topologically, residues 187–190 (SHDL) are extracellular. The helical transmembrane segment at 191–211 (FLASPNMVATPLGILQLILYF) threads the bilayer. Residues 212–263 (KYKNKKDLAPTTMVITKRNDHDDKNKATLEFVVDVDRNSDTNEKNSNNASSI) lie on the Cytoplasmic side of the membrane.

The protein belongs to the SWEET sugar transporter family. In terms of assembly, forms heterooligomers with SWEET11, SWEET13 and SWEET17.

Its subcellular location is the cell membrane. Mediates both low-affinity uptake and efflux of sugar across the plasma membrane. In Arabidopsis thaliana (Mouse-ear cress), this protein is Bidirectional sugar transporter SWEET3.